We begin with the raw amino-acid sequence, 341 residues long: Phosphoribosylformylglycinamidine cyclo-ligase (341 aa).

Belongs to the AIR synthase family.

Its subcellular location is the cytoplasm. The enzyme catalyses 2-formamido-N(1)-(5-O-phospho-beta-D-ribosyl)acetamidine + ATP = 5-amino-1-(5-phospho-beta-D-ribosyl)imidazole + ADP + phosphate + H(+). It participates in purine metabolism; IMP biosynthesis via de novo pathway; 5-amino-1-(5-phospho-D-ribosyl)imidazole from N(2)-formyl-N(1)-(5-phospho-D-ribosyl)glycinamide: step 2/2. The polypeptide is Phosphoribosylformylglycinamidine cyclo-ligase (Xanthomonas campestris pv. campestris (strain 8004)).